A 253-amino-acid polypeptide reads, in one-letter code: Hydroxyacylglutathione hydrolase (253 aa).

Residues His54, His56, Asp58, His59, His112, Asp131, and His169 each contribute to the Zn(2+) site.

This sequence belongs to the metallo-beta-lactamase superfamily. Glyoxalase II family. In terms of assembly, monomer. Requires Zn(2+) as cofactor.

The catalysed reaction is an S-(2-hydroxyacyl)glutathione + H2O = a 2-hydroxy carboxylate + glutathione + H(+). Its pathway is secondary metabolite metabolism; methylglyoxal degradation; (R)-lactate from methylglyoxal: step 2/2. In terms of biological role, thiolesterase that catalyzes the hydrolysis of S-D-lactoyl-glutathione to form glutathione and D-lactic acid. The protein is Hydroxyacylglutathione hydrolase of Bartonella henselae (strain ATCC 49882 / DSM 28221 / CCUG 30454 / Houston 1) (Rochalimaea henselae).